A 225-amino-acid chain; its full sequence is NAD(P)H-quinone oxidoreductase subunit K, chloroplastic (225 aa).

[4Fe-4S] cluster contacts are provided by cysteine 43, cysteine 44, cysteine 108, and cysteine 139.

The protein belongs to the complex I 20 kDa subunit family. In terms of assembly, NDH is composed of at least 16 different subunits, 5 of which are encoded in the nucleus. It depends on [4Fe-4S] cluster as a cofactor.

It is found in the plastid. The protein localises to the chloroplast thylakoid membrane. It catalyses the reaction a plastoquinone + NADH + (n+1) H(+)(in) = a plastoquinol + NAD(+) + n H(+)(out). The catalysed reaction is a plastoquinone + NADPH + (n+1) H(+)(in) = a plastoquinol + NADP(+) + n H(+)(out). Functionally, NDH shuttles electrons from NAD(P)H:plastoquinone, via FMN and iron-sulfur (Fe-S) centers, to quinones in the photosynthetic chain and possibly in a chloroplast respiratory chain. The immediate electron acceptor for the enzyme in this species is believed to be plastoquinone. Couples the redox reaction to proton translocation, and thus conserves the redox energy in a proton gradient. This chain is NAD(P)H-quinone oxidoreductase subunit K, chloroplastic, found in Capsella bursa-pastoris (Shepherd's purse).